We begin with the raw amino-acid sequence, 506 residues long: Ribose import ATP-binding protein RbsA 2 (506 aa).

ABC transporter domains lie at 7 to 242 (LEMR…VGRP) and 250 to 497 (ERDI…TGVN). Position 39–46 (39–46 (GENGAGKS)) interacts with ATP.

This sequence belongs to the ABC transporter superfamily. Ribose importer (TC 3.A.1.2.1) family. The complex is composed of an ATP-binding protein (RbsA), two transmembrane proteins (RbsC) and a solute-binding protein (RbsB).

Its subcellular location is the cell inner membrane. It carries out the reaction D-ribose(out) + ATP + H2O = D-ribose(in) + ADP + phosphate + H(+). Its function is as follows. Part of the ABC transporter complex RbsABC involved in ribose import. Responsible for energy coupling to the transport system. The sequence is that of Ribose import ATP-binding protein RbsA 2 from Escherichia coli O157:H7.